The primary structure comprises 1014 residues: Protein argonaute 2 (1014 aa).

The segment covering 1-15 (MERGGYRGGRGDGRG) has biased composition (basic and acidic residues). The segment at 1-137 (MERGGYRGGR…PSTSTTVVSE (137 aa)) is disordered. Gly residues-rich tracts occupy residues 18–29 (GRGYGGGGGGGE) and 49–58 (RGGGNRGQGR). Residues 83–104 (QFQQPRPQVAPQPSQAPASYAG) show a composition bias toward low complexity. Residues 105–114 (SVGGVAGRGA) show a composition bias toward gly residues. A compositionally biased stretch (low complexity) spans 121 to 137 (VPSDSASPSTSTTVVSE). Residues 369–482 (SVIEYLKLYF…VPMEFCDLVE (114 aa)) enclose the PAZ domain. Residues 666–965 (LVLCAMSRKD…VAFRGRMYHE (300 aa)) enclose the Piwi domain. 3 interaction with guide RNA regions span residues 857–858 (KR), 900–908 (HHGGIGTSK), and 937–959 (FTRC…VAFR).

It belongs to the argonaute family. Ago subfamily. As to quaternary structure, interacts with NERD.

In terms of biological role, involved in RNA-mediated post-transcriptional gene silencing (PTGS). Main component of the RNA-induced silencing complex (RISC) that binds to a short guide RNA such as microRNA (miRNA) or small interfering RNA (siRNA). RISC uses the mature miRNA or siRNA as a guide for slicer-directed cleavage of homologous mRNAs to repress gene expression. Associates mainly with siRNAs of 21 nucleotide in length and preferentially recruits small RNAs with a 5' terminal adenosine. Probably involved in antiviral RNA silencing. Associates with siRNA derived from cucumber mosaic virus (CMV). Targeted by turnip yellows virus (TuYV) protein P0 (via F-box-like domain) for probable proteasome degradation and thereby inactivating AGO2 function in RNA silencing. Required to direct NERD-dependent DNA methylation and silencing. This Arabidopsis thaliana (Mouse-ear cress) protein is Protein argonaute 2 (AGO2).